A 342-amino-acid polypeptide reads, in one-letter code: UDP-N-acetylglucosamine transporter YEA4 (342 aa).

Topologically, residues 1–6 are cytoplasmic; that stretch reads MWNSLK. A helical membrane pass occupies residues 7–27; that stretch reads AFALVFGGCCSNVITFETLMS. Residues 28–35 lie on the Lumenal side of the membrane; the sequence is NETGSINN. Residues 36-56 form a helical membrane-spanning segment; the sequence is LITFCQFLFVTCQGLPEFLDV. The Cytoplasmic segment spans residues 57 to 61; it reads HQPFP. Residues 62–82 form a helical membrane-spanning segment; the sequence is YFKPLKTPLHVYVITVVLFYI. The Lumenal segment spans residues 83-96; the sequence is SSTTNNNVFKYNIS. A helical transmembrane segment spans residues 97 to 117; the sequence is IPIHIVFRCFGTVITMFTCWL. The Cytoplasmic portion of the chain corresponds to 118–123; it reads LNGRKY. A helical membrane pass occupies residues 124 to 144; that stretch reads TKIQILSTLFLTIGAIIASLF. The Lumenal portion of the chain corresponds to 145 to 168; sequence KDADFRYQDLKLQAWKIGSDQSVD. The chain crosses the membrane as a helical span at residues 169–189; sequence LTFIFGICILVLSSFTSSLLS. The Cytoplasmic portion of the chain corresponds to 190–253; it reads AYNERTYQKY…GGKILVPREE (64 aa). Residues 254–274 traverse the membrane as a helical segment; that stretch reads TLLLFNVLTQYFCVKGVNILA. Over 275 to 307 the chain is Lumenal; sequence SKTNALTLSITLLVRKFISLLLSVRLFDNNLSY. The helical transmembrane segment at 308–328 threads the bilayer; that stretch reads TGYIGVYLVFFGAFIYSLGSI. The Cytoplasmic segment spans residues 329–342; sequence HPRQNDKGAIKKSK.

The protein belongs to the nucleotide-sugar transporter family. SLC35B subfamily.

The protein resides in the endoplasmic reticulum. The protein localises to the endoplasmic reticulum membrane. Functionally, sugar transporter that specifically mediates the transport of UDP-N-acetylglucosamine (UDP-GlcNAc) and is required for cell wall chitin synthesis. In Saccharomyces cerevisiae (strain ATCC 204508 / S288c) (Baker's yeast), this protein is UDP-N-acetylglucosamine transporter YEA4 (YEA4).